The chain runs to 732 residues: Catalase-peroxidase (732 aa).

The segment covering 1 to 11 (MDAKTDDKDGG) has biased composition (basic and acidic residues). Residues 1–24 (MDAKTDDKDGGKCPFPHGGGRGRR) form a disordered region. The tryptophyl-tyrosyl-methioninium (Trp-Tyr) (with M-245) cross-link spans 97 to 219 (WHSAGTYRTT…LGAVQMGLIY (123 aa)). Histidine 98 serves as the catalytic Proton acceptor. The segment at residues 219-245 (YVNPEGPNGNPDPVAAAKDIRETFARM) is a cross-link (tryptophyl-tyrosyl-methioninium (Tyr-Met) (with W-97)). Histidine 260 is a heme b binding site.

The protein belongs to the peroxidase family. Peroxidase/catalase subfamily. As to quaternary structure, homodimer or homotetramer. The cofactor is heme b. In terms of processing, formation of the three residue Trp-Tyr-Met cross-link is important for the catalase, but not the peroxidase activity of the enzyme.

It carries out the reaction H2O2 + AH2 = A + 2 H2O. It catalyses the reaction 2 H2O2 = O2 + 2 H2O. In terms of biological role, bifunctional enzyme with both catalase and broad-spectrum peroxidase activity. The polypeptide is Catalase-peroxidase (Rhodopseudomonas palustris (strain HaA2)).